We begin with the raw amino-acid sequence, 24 residues long: Humanin-like 1 (24 aa).

This sequence belongs to the humanin family. Highly expressed in the kidney, heart muscle and testis.

The protein localises to the secreted. The protein resides in the cytoplasm. Functionally, plays a role as a neuroprotective and antiapoptotic factor. This chain is Humanin-like 1, found in Homo sapiens (Human).